We begin with the raw amino-acid sequence, 203 residues long: Imidazoleglycerol-phosphate dehydratase (203 aa).

It belongs to the imidazoleglycerol-phosphate dehydratase family.

The protein localises to the cytoplasm. The catalysed reaction is D-erythro-1-(imidazol-4-yl)glycerol 3-phosphate = 3-(imidazol-4-yl)-2-oxopropyl phosphate + H2O. Its pathway is amino-acid biosynthesis; L-histidine biosynthesis; L-histidine from 5-phospho-alpha-D-ribose 1-diphosphate: step 6/9. This is Imidazoleglycerol-phosphate dehydratase from Helicobacter hepaticus (strain ATCC 51449 / 3B1).